The following is a 178-amino-acid chain: MDALSPKKQPIALYPGTFDPVTLGHLDIIRRGARIFDHLIIAVAENPGKSPLFSSEERASMIRHEISRLENPTKSRIEVIIYNSLLMDCVESQGASVILRGLRAVADFEYEYQMAGMNQQINNKIETVFLMADSVLQPVASRLVKEIAFYNGNITPFVPPYVVQKLQEAVTRKKSFQD.

Threonine 17 is a substrate binding site. ATP-binding positions include 17–18 (TF) and histidine 25. Residues lysine 49, leucine 86, and arginine 100 each contribute to the substrate site. ATP contacts are provided by residues 101–103 (GLR), glutamate 111, and 136–142 (LQPVASR).

The protein belongs to the bacterial CoaD family. As to quaternary structure, homohexamer. Mg(2+) is required as a cofactor.

It is found in the cytoplasm. The catalysed reaction is (R)-4'-phosphopantetheine + ATP + H(+) = 3'-dephospho-CoA + diphosphate. It functions in the pathway cofactor biosynthesis; coenzyme A biosynthesis; CoA from (R)-pantothenate: step 4/5. In terms of biological role, reversibly transfers an adenylyl group from ATP to 4'-phosphopantetheine, yielding dephospho-CoA (dPCoA) and pyrophosphate. In Zymomonas mobilis subsp. mobilis (strain ATCC 31821 / ZM4 / CP4), this protein is Phosphopantetheine adenylyltransferase.